Reading from the N-terminus, the 178-residue chain is Adenine phosphoribosyltransferase (178 aa).

Belongs to the purine/pyrimidine phosphoribosyltransferase family. Homodimer.

The protein localises to the cytoplasm. The enzyme catalyses AMP + diphosphate = 5-phospho-alpha-D-ribose 1-diphosphate + adenine. The protein operates within purine metabolism; AMP biosynthesis via salvage pathway; AMP from adenine: step 1/1. Its function is as follows. Catalyzes a salvage reaction resulting in the formation of AMP, that is energically less costly than de novo synthesis. The chain is Adenine phosphoribosyltransferase from Streptomyces clavuligerus.